The chain runs to 320 residues: Olfactory receptor 2AT4 (320 aa).

Residues 1-31 (MDATACNESVDGSPVFYLLGIPSLPETFFLP) lie on the Extracellular side of the membrane. Asn7 carries an N-linked (GlcNAc...) asparagine glycan. The chain crosses the membrane as a helical span at residues 32–52 (VFFIFLLFYLLILMGNALILV). At 53–62 (AVVAEPSLHK) the chain is on the cytoplasmic side. Residues 63–83 (PMYFFLINLSTLDILFTTTTV) form a helical membrane-spanning segment. At 84–102 (PKMLSLFLLGDRFLSFSSC) the chain is on the extracellular side. A disulfide bond links Cys102 and Cys184. Residues 103–123 (LLQMYLFQSFTCSEAFILVVM) traverse the membrane as a helical segment. Residues 124–145 (AYDRYVAICHPLHYPVLMNPQT) lie on the Cytoplasmic side of the membrane. Residues 146 to 166 (NATLAASAWLTALLLPIPAVV) form a helical membrane-spanning segment. Residues 167 to 200 (RTSQMAYNSIAYIYHCFCDHLAVVQASCSDTTPQ) lie on the Extracellular side of the membrane. Residues 201 to 221 (TLMGFCIAMVVSFLPLLLVLL) form a helical membrane-spanning segment. At 222–245 (SYVHILASVLRISSLEGRAKAFST) the chain is on the cytoplasmic side. The helical transmembrane segment at 246 to 266 (CSSHLLVVGTYYSSIAIAYVA) threads the bilayer. Over 267 to 276 (YRADLPLDFH) the chain is Extracellular. Residues 277–297 (IMGNVVYAILTPILNPLIYTL) traverse the membrane as a helical segment. Residues 298–320 (RNRDVKAAITKIMSQDPGCDRSI) lie on the Cytoplasmic side of the membrane.

The protein belongs to the G-protein coupled receptor 1 family. As to expression, detected in the keratinocytes of the epidermis (at protein level). Detected in hair follicles in proximal outer root sheath and hair matrix keratinocytes (at protein level).

It localises to the cell membrane. Functionally, olfactory receptor. Activated by the synthetic sandalwood odorant sandalore. Endogenous ligand is unknown. The activity of this receptor is probably mediated by G proteins which induce elevation of intracellular Ca(2+), a cAMP-dependent pathway and phosphorylation of MAPK1/ERK2, MAPK3/ERK1 and p38 MAPKs. Activation of OR2AT4 induces proliferation, migration, and re-epithelialization during wound-healing processes of keratinocytes. Stimulation of OR2AT4 by sandalore promotes hair growth by decreasing apoptosis and increasing production of the anagen-prolonging growth factor IGF1 as well as other pathways involving various kinases. This chain is Olfactory receptor 2AT4, found in Homo sapiens (Human).